The primary structure comprises 267 residues: Proteasome assembly chaperone 2 (267 aa).

This sequence belongs to the PSMG2 family. Component of the 20S proteasome chaperone. Forms a heterodimer with PBA1 that binds to proteasome precursors.

The protein localises to the cytoplasm. Involved in 20S proteasome assembly. Required for maximal proteasome activity. Affects the chymotrypsin-like activity of the proteasome. Can be degraded by the proteasome. Involved in the endoplasmic reticulum-associated degradation (ERAD). This Saccharomyces cerevisiae (strain ATCC 204508 / S288c) (Baker's yeast) protein is Proteasome assembly chaperone 2 (ADD66).